Consider the following 337-residue polypeptide: Monoacylglycerol lipase abhd6-A (337 aa).

Over 1 to 19 (MDLDVLNMFLVAGGTLLVP) the chain is Extracellular. A helical; Signal-anchor for type II membrane protein membrane pass occupies residues 20 to 42 (ILAFVTSFLLWPAALIKIYYWYW). Residues 43 to 337 (RRALGMQVKF…QSTENNKKHE (295 aa)) lie on the Cytoplasmic side of the membrane. Residues 73-313 (SVLMLHGFSA…CGHSVVMERP (241 aa)) form the AB hydrolase-1 domain. The active-site Nucleophile is the S148. Residues D278 and H306 each act as charge relay system in the active site.

Belongs to the AB hydrolase superfamily.

The protein localises to the late endosome membrane. It is found in the lysosome membrane. The protein resides in the mitochondrion membrane. The enzyme catalyses Hydrolyzes glycerol monoesters of long-chain fatty acids.. The catalysed reaction is 1-octanoylglycerol + H2O = octanoate + glycerol + H(+). It carries out the reaction 1-decanoylglycerol + H2O = decanoate + glycerol + H(+). It catalyses the reaction 1-dodecanoylglycerol + H2O = dodecanoate + glycerol + H(+). The enzyme catalyses 1-tetradecanoylglycerol + H2O = tetradecanoate + glycerol + H(+). The catalysed reaction is 2-hexadecanoylglycerol + H2O = glycerol + hexadecanoate + H(+). It carries out the reaction 2-(9Z-octadecenoyl)-glycerol + H2O = glycerol + (9Z)-octadecenoate + H(+). It catalyses the reaction 1-(9Z-octadecenoyl)-glycerol + H2O = glycerol + (9Z)-octadecenoate + H(+). The enzyme catalyses 2-(9Z,12Z-octadecadienoyl)-glycerol + H2O = (9Z,12Z)-octadecadienoate + glycerol + H(+). The catalysed reaction is 2-(5Z,8Z,11Z,14Z-eicosatetraenoyl)-glycerol + H2O = glycerol + (5Z,8Z,11Z,14Z)-eicosatetraenoate + H(+). It carries out the reaction 1-(5Z,8Z,11Z,14Z-eicosatetraenoyl)-glycerol + H2O = glycerol + (5Z,8Z,11Z,14Z)-eicosatetraenoate + H(+). It catalyses the reaction 1-(9Z,12Z-octadecadienoyl)-glycerol + H2O = (9Z,12Z)-octadecadienoate + glycerol + H(+). The enzyme catalyses 3-(9Z-octadecenoyl)-sn-glycero-1-phospho-(3'-(9Z-octadecenoyl)-1'-sn-glycerol) + H2O = 3-(9Z-octadecenoyl)-sn-glycero-1-phospho-(1'-sn-glycerol) + (9Z)-octadecenoate + H(+). The catalysed reaction is (S,S)-2-(9Z-octadecenoyl)-sn-glycero-1-phospho-(2'-(9Z-octadecenoyl)-1'-sn-glycerol) + H2O = (S,S)-2-(9Z-octadecenoyl)-sn-glycero-1-phospho-(1'-sn-glycerol) + (9Z)-octadecenoate + H(+). It carries out the reaction (R,R)-2-(9Z-octadecenoyl)-sn-glycero-3-phospho-(2'-(9Z-octadecenoyl)-3'-sn-glycerol) + H2O = (R,R)-2-(9Z-octadecenoyl)-sn-glycero-3-phospho-(3'-sn-glycerol) + (9Z)-octadecenoate + H(+). Its function is as follows. Lipase that preferentially hydrolysis medium-chain saturated monoacylglycerols including 2-arachidonoylglycerol. Through 2-arachidonoylglycerol degradation may regulate endocannabinoid signaling pathways. Also has a lysophosphatidyl lipase activity with a preference for lysophosphatidylglycerol among other lysophospholipids. Also able to degrade bis(monoacylglycero)phosphate (BMP) and constitutes the major enzyme for BMP catabolism. BMP, also known as lysobisphosphatidic acid, is enriched in late endosomes and lysosomes and plays a key role in the formation of intraluminal vesicles and in lipid sorting. The sequence is that of Monoacylglycerol lipase abhd6-A (abhd6-a) from Xenopus laevis (African clawed frog).